The chain runs to 187 residues: GTP cyclohydrolase 1 (187 aa).

Positions 74, 77, and 145 each coordinate Zn(2+).

This sequence belongs to the GTP cyclohydrolase I family. As to quaternary structure, homomer.

The catalysed reaction is GTP + H2O = 7,8-dihydroneopterin 3'-triphosphate + formate + H(+). It participates in cofactor biosynthesis; 7,8-dihydroneopterin triphosphate biosynthesis; 7,8-dihydroneopterin triphosphate from GTP: step 1/1. The sequence is that of GTP cyclohydrolase 1 from Sulfurihydrogenibium sp. (strain YO3AOP1).